A 442-amino-acid polypeptide reads, in one-letter code: 23S rRNA (uracil(1939)-C(5))-methyltransferase RlmD (442 aa).

The TRAM domain maps to 12-70 (SKQLSAKVTLEVTKLDHLGAGMAQHQGKIVFIPGALPNEKVTVQLTEQKKRHARAKLLK). The [4Fe-4S] cluster site is built by C83, C89, C92, and C171. S-adenosyl-L-methionine is bound by residues Q276, F305, N310, E326, D353, and D373. C399 serves as the catalytic Nucleophile.

It belongs to the class I-like SAM-binding methyltransferase superfamily. RNA M5U methyltransferase family. RlmD subfamily.

It catalyses the reaction uridine(1939) in 23S rRNA + S-adenosyl-L-methionine = 5-methyluridine(1939) in 23S rRNA + S-adenosyl-L-homocysteine + H(+). Catalyzes the formation of 5-methyl-uridine at position 1939 (m5U1939) in 23S rRNA. The protein is 23S rRNA (uracil(1939)-C(5))-methyltransferase RlmD of Shewanella sediminis (strain HAW-EB3).